A 284-amino-acid polypeptide reads, in one-letter code: Homeobox protein CDX-4 (284 aa).

2 disordered regions span residues 15-40 and 120-155; these read PGTL…SPMP and GGGT…SRHS. Residues 22 to 37 show a composition bias toward gly residues; that stretch reads GGDGTAGTGGTGGGGS. The homeobox DNA-binding region spans 173-232; the sequence is KEKYRVVYTDHQRLELEKEFHCNRYITIQRKSELAVNLGLSERQVKIWFQNRRAKERKMI. Over residues 238–253 the composition is skewed to polar residues; the sequence is QFENSGGSVQSDSDSI. The interval 238 to 259 is disordered; the sequence is QFENSGGSVQSDSDSISPGELP.

This sequence belongs to the Caudal homeobox family.

The protein localises to the nucleus. This is Homeobox protein CDX-4 (CDX4) from Homo sapiens (Human).